The following is a 418-amino-acid chain: Transmembrane protease serine 11A (418 aa).

Over 1–18 the chain is Cytoplasmic; that stretch reads MMYRTVGFGTRSRNLKPW. The chain crosses the membrane as a helical; Signal-anchor for type II membrane protein span at residues 19 to 39; sequence MIAVLIVLSLTVVAVTIGLLV. Residues 40–418 are Extracellular-facing; it reads HFLVFDQKKE…RNWIASKTGI (379 aa). The 118-residue stretch at 47–164 folds into the SEA domain; that stretch reads KKEYYHGSFK…SSVQVNAMSS (118 aa). Asn-153 is a glycosylation site (N-linked (GlcNAc...) asparagine). The Peptidase S1 domain maps to 187–417; that stretch reads IASGVIAPKA…YRNWIASKTG (231 aa). A disulfide bond links Cys-212 and Cys-228. Residues His-227 and Asp-272 each act as charge relay system in the active site. A glycan (N-linked (GlcNAc...) asparagine) is linked at Asn-303. Cystine bridges form between Cys-337–Cys-353 and Cys-364–Cys-393. Residue Ser-368 is the Charge relay system of the active site.

It belongs to the peptidase S1 family. As to quaternary structure, may interact with ZBTB17. Expressed in esophagus, liver, colon and lung. Down-regulated in esophagus cancers.

The protein localises to the membrane. Functionally, probable serine protease which may play a role in cellular senescence. Overexpression inhibits cell growth and induce G1 cell cycle arrest. In Homo sapiens (Human), this protein is Transmembrane protease serine 11A (TMPRSS11A).